We begin with the raw amino-acid sequence, 410 residues long: Lipoyl synthase, mitochondrial (410 aa).

Cys134, Cys139, Cys145, Cys165, Cys169, Cys172, and Ser390 together coordinate [4Fe-4S] cluster. The 232-residue stretch at 148 to 379 (AGKSTAATAT…AKIGNDLGFL (232 aa)) folds into the Radical SAM core domain.

Belongs to the radical SAM superfamily. Lipoyl synthase family. The cofactor is [4Fe-4S] cluster.

The protein resides in the mitochondrion. The enzyme catalyses [[Fe-S] cluster scaffold protein carrying a second [4Fe-4S](2+) cluster] + N(6)-octanoyl-L-lysyl-[protein] + 2 oxidized [2Fe-2S]-[ferredoxin] + 2 S-adenosyl-L-methionine + 4 H(+) = [[Fe-S] cluster scaffold protein] + N(6)-[(R)-dihydrolipoyl]-L-lysyl-[protein] + 4 Fe(3+) + 2 hydrogen sulfide + 2 5'-deoxyadenosine + 2 L-methionine + 2 reduced [2Fe-2S]-[ferredoxin]. The protein operates within protein modification; protein lipoylation via endogenous pathway; protein N(6)-(lipoyl)lysine from octanoyl-[acyl-carrier-protein]: step 2/2. In terms of biological role, catalyzes the radical-mediated insertion of two sulfur atoms into the C-6 and C-8 positions of the octanoyl moiety bound to the lipoyl domains of lipoate-dependent enzymes, thereby converting the octanoylated domains into lipoylated derivatives. This Schistosoma mansoni (Blood fluke) protein is Lipoyl synthase, mitochondrial.